A 301-amino-acid polypeptide reads, in one-letter code: XIAP-associated factor 1 (301 aa).

A TRAF-type zinc finger spans residues 22-99 (LHEAYCLRFL…KLDMQLSKLE (78 aa)). Residues 189–257 (ILPSSLPSQA…KPRTSSPRGD (69 aa)) are disordered. Positions 193-205 (SLPSQAAENQTST) are enriched in polar residues.

Interacts with BIRC4; the interaction is not detected in. Interacts with BIRC1, BIRC2, BIRC3, BIRC7 and BIRC8. Part of an complex consisting of BIRC4, XAF1 and BIRC5; the complex formation requires IFN-beta stimulation. Interacts with RNF114, the interaction increases XAF1 stability and proapoptotic effects, and may regulate IFN signaling. In terms of tissue distribution, widely expressed. Expression is frequently down-regulated in cancer cell lines. Isoform 5 is widely expressed. Expressed in placenta (at protein level).

The protein resides in the cytoplasm. The protein localises to the nucleus. Its subcellular location is the mitochondrion. In terms of biological role, seems to function as a negative regulator of members of the IAP (inhibitor of apoptosis protein) family. Inhibits anti-caspase activity of BIRC4. Induces cleavage and inactivation of BIRC4 independent of caspase activation. Mediates TNF-alpha-induced apoptosis and is involved in apoptosis in trophoblast cells. May inhibit BIRC4 indirectly by activating the mitochondrial apoptosis pathway. After translocation to mitochondria, promotes translocation of BAX to mitochondria and cytochrome c release from mitochondria. Seems to promote the redistribution of BIRC4 from the cytoplasm to the nucleus, probably independent of BIRC4 inactivation which seems to occur in the cytoplasm. The BIRC4-XAF1 complex mediates down-regulation of BIRC5/survivin; the process requires the E3 ligase activity of BIRC4. Seems to be involved in cellular sensitivity to the proapoptotic actions of TRAIL. May be a tumor suppressor by mediating apoptosis resistance of cancer cells. The protein is XIAP-associated factor 1 (XAF1) of Homo sapiens (Human).